The sequence spans 131 residues: Large ribosomal subunit protein eL32 (131 aa).

Belongs to the eukaryotic ribosomal protein eL32 family. Component of the large ribosomal subunit. Mature ribosomes consist of a small (40S) and a large (60S) subunit. The 40S subunit contains about 32 different proteins and 1 molecule of RNA (18S). The 60S subunit contains 45 different proteins and 3 molecules of RNA (25S, 5.8S and 5S).

It is found in the cytoplasm. In terms of biological role, component of the ribosome, a large ribonucleoprotein complex responsible for the synthesis of proteins in the cell. The small ribosomal subunit (SSU) binds messenger RNAs (mRNAs) and translates the encoded message by selecting cognate aminoacyl-transfer RNA (tRNA) molecules. The large subunit (LSU) contains the ribosomal catalytic site termed the peptidyl transferase center (PTC), which catalyzes the formation of peptide bonds, thereby polymerizing the amino acids delivered by tRNAs into a polypeptide chain. The nascent polypeptides leave the ribosome through a tunnel in the LSU and interact with protein factors that function in enzymatic processing, targeting, and the membrane insertion of nascent chains at the exit of the ribosomal tunnel. The chain is Large ribosomal subunit protein eL32 from Candida albicans (strain SC5314 / ATCC MYA-2876) (Yeast).